A 220-amino-acid chain; its full sequence is Thiopurine S-methyltransferase (220 aa).

S-adenosyl-L-methionine is bound by residues Trp14, Leu49, Glu70, and Arg127.

Belongs to the class I-like SAM-binding methyltransferase superfamily. TPMT family.

It localises to the cytoplasm. It catalyses the reaction S-adenosyl-L-methionine + a thiopurine = S-adenosyl-L-homocysteine + a thiopurine S-methylether.. The sequence is that of Thiopurine S-methyltransferase from Gluconobacter oxydans (strain 621H) (Gluconobacter suboxydans).